The primary structure comprises 118 residues: Large ribosomal subunit protein bL20 (118 aa).

Belongs to the bacterial ribosomal protein bL20 family.

Functionally, binds directly to 23S ribosomal RNA and is necessary for the in vitro assembly process of the 50S ribosomal subunit. It is not involved in the protein synthesizing functions of that subunit. The polypeptide is Large ribosomal subunit protein bL20 (Pseudoalteromonas atlantica (strain T6c / ATCC BAA-1087)).